Here is a 1189-residue protein sequence, read N- to C-terminus: Tyrosine-protein phosphatase non-receptor type 14 (1189 aa).

One can recognise an FERM domain in the interval 21–306 (FVTRIRLLDS…TRHKFYKQNK (286 aa)). Ser-314, Ser-461, Ser-486, Ser-591, Ser-593, Ser-594, and Ser-646 each carry phosphoserine. Positions 744-775 (ARIPNRPPPEYPGPRKSVSNGALRQDQGTPLP) are disordered. Polar residues predominate over residues 760-771 (SVSNGALRQDQG). Ser-833 bears the Phosphoserine mark. Residues 911–1182 (VFTEYEQIPN…KFVYQVLVQF (272 aa)) form the Tyrosine-protein phosphatase domain. The active-site Phosphocysteine intermediate is the Cys-1123. Substrate contacts are provided by residues 1123-1129 (CSAGVGR) and Gln-1167.

The protein belongs to the protein-tyrosine phosphatase family. Non-receptor class subfamily. As to quaternary structure, interacts with FLT4; the interaction is enhanced by stimulation with VEGFC. Interacts (via PPxY motifs) with YAP1 (via WW domains); this interaction leads to the cytoplasmic sequestration of YAP1 and inhibits its transcriptional coactivator activity. In terms of processing, ubiquitinated by the ECS (Elongin BC-CUL2/5-SOCS-box protein)/LRR1 E3 ligase complex and subsequently targeted to proteasomal degradation. Thymus; in cells of both hematopoietic and non-hematopoietic origins.

It localises to the cytoplasm. The protein localises to the cytoskeleton. Its subcellular location is the nucleus. The enzyme catalyses O-phospho-L-tyrosyl-[protein] + H2O = L-tyrosyl-[protein] + phosphate. Protein tyrosine phosphatase which may play a role in the regulation of lymphangiogenesis, cell-cell adhesion, cell-matrix adhesion, cell migration, cell growth and also regulates TGF-beta gene expression, thereby modulating epithelial-mesenchymal transition. Mediates beta-catenin dephosphorylation at adhesion junctions. Acts as a negative regulator of the oncogenic property of YAP, a downstream target of the hippo pathway, in a cell density-dependent manner. May function as a tumor suppressor. This Mus musculus (Mouse) protein is Tyrosine-protein phosphatase non-receptor type 14 (Ptpn14).